The primary structure comprises 146 residues: Hemoglobin subunit beta-S/F (146 aa).

Valine 1 bears the N-acetylvaline mark. Residues 2–146 form the Globin domain; sequence HLTDGEKNAI…VANALSHKYH (145 aa). Residue serine 44 is modified to Phosphoserine. Lysine 59 is subject to N6-acetyllysine. Residue histidine 63 participates in heme b binding. Lysine 82 bears the N6-acetyllysine mark. A heme b-binding site is contributed by histidine 92. Cysteine 93 carries the S-nitrosocysteine modification. Lysine 144 carries the post-translational modification N6-acetyllysine.

It belongs to the globin family. In terms of assembly, heterotetramer of two alpha chains and two beta chains. As to expression, red blood cells.

Involved in oxygen transport from the lung to the various peripheral tissues. This Urocitellus townsendii (Townsend's ground squirrel) protein is Hemoglobin subunit beta-S/F.